The primary structure comprises 141 residues: Lutropin subunit beta (141 aa).

Positions 1–18 (MGTLQGLLLWLLLGTGGA) are cleaved as a signal peptide. Intrachain disulfides connect cysteine 29/cysteine 77, cysteine 43/cysteine 92, cysteine 46/cysteine 130, cysteine 54/cysteine 108, cysteine 58/cysteine 110, and cysteine 113/cysteine 120. N-linked (GlcNAc...) asparagine glycosylation is present at asparagine 33.

Belongs to the glycoprotein hormones subunit beta family. In terms of assembly, heterodimer of a common alpha chain and a unique beta chain which confers biological specificity to thyrotropin, lutropin, follitropin and gonadotropin.

It is found in the secreted. Functionally, promotes spermatogenesis and ovulation by stimulating the testes and ovaries to synthesize steroids. This chain is Lutropin subunit beta (LHB), found in Oryctolagus cuniculus (Rabbit).